A 276-amino-acid chain; its full sequence is Rhomboid protease GlpG (276 aa).

Helical transmembrane passes span G94–L114, A142–G162, I169–Q189, F192–W212, L229–I249, and G252–G272. S201 serves as the catalytic Nucleophile. H254 is a catalytic residue.

It belongs to the peptidase S54 family.

Its subcellular location is the cell inner membrane. It carries out the reaction Cleaves type-1 transmembrane domains using a catalytic dyad composed of serine and histidine that are contributed by different transmembrane domains.. Functionally, rhomboid-type serine protease that catalyzes intramembrane proteolysis. The sequence is that of Rhomboid protease GlpG from Klebsiella pneumoniae subsp. pneumoniae (strain ATCC 700721 / MGH 78578).